Consider the following 557-residue polypeptide: Elongator complex protein 3 (557 aa).

The region spanning 91 to 381 (RTASGIAVVA…YRVQRDIPMP (291 aa)) is the Radical SAM core domain. [4Fe-4S] cluster contacts are provided by cysteine 108, cysteine 118, and cysteine 121. Acetyl-CoA is bound at residue lysine 173. The N-acetyltransferase domain maps to 405-557 (TTCRDVRTRE…LDGPYMSKRI (153 aa)). Lysine 453 is covalently cross-linked (Glycyl lysine isopeptide (Lys-Gly) (interchain with G-Cter in ubiquitin)). Residues 485–488 (ELHV), 508–510 (FGT), and tyrosine 541 contribute to the acetyl-CoA site.

Belongs to the ELP3 family. Component of the elongator complex which consists of ELP1/IKI3, ELP2, ELP3, ELP4, ELP5/IKI1 and ELP6. The elongator complex is composed of two copies of the Elp123 subcomplex (composed of ELP1/IKI3, ELP2 and ELP3) and two copies of the Elp456 subcomplex (composed of ELP4, ELP5/IKI1 and ELP6). The Elp123 subcomplex forms a two-lobed scaffold, which binds the Elp456 subcomplex asymmetrically. In each lobe, ELP2 is tightly sandwiched between ELP1/IKI3 and ELP3. The Elp123 subcomplex binds tRNA through ELP1/IKI3 and ELP3 and can bind 2 tRNAs simultaneously. tRNA-binding induces conformational rearrangements which precisely position the targeted anticodon base in the active site. ELP3 interacts with KTI11/DPH3. ELP3 interacts with KTI12. The Elp456 subcomplex binds tRNA and has ATPase activity. [4Fe-4S] cluster serves as cofactor.

It localises to the cytoplasm. The protein resides in the nucleus. The enzyme catalyses uridine(34) in tRNA + acetyl-CoA + S-adenosyl-L-methionine + H2O = 5-(carboxymethyl)uridine(34) in tRNA + 5'-deoxyadenosine + L-methionine + CoA + 2 H(+). It functions in the pathway tRNA modification; 5-methoxycarbonylmethyl-2-thiouridine-tRNA biosynthesis. In terms of biological role, catalytic tRNA acetyltransferase subunit of the elongator complex which is required for multiple tRNA modifications, including mcm5U (5-methoxycarbonylmethyl uridine), mcm5s2U (5-methoxycarbonylmethyl-2-thiouridine), and ncm5U (5-carbamoylmethyl uridine). In the elongator complex, acts as a tRNA uridine(34) acetyltransferase, which mediates formation of carboxymethyluridine in the wobble base at position 34 in tRNAs. The complex functions as a gamma-toxin target (TOT); disruption of the complex confers resistance to Kluyveromyces lactis toxin zymocin (pGKL1 killer toxin). May also be involved in sensitivity to Pichia inositovora toxin. Independently, ELP3 may be involved in polarized exocytosis. This chain is Elongator complex protein 3, found in Saccharomyces cerevisiae (strain ATCC 204508 / S288c) (Baker's yeast).